The following is a 212-amino-acid chain: Large ribosomal subunit protein uL3 (212 aa).

The disordered stretch occupies residues 117–142; it reads TSKGKGFQGNIKRHNQSRGPMTHGSR.

Belongs to the universal ribosomal protein uL3 family. Part of the 50S ribosomal subunit. Forms a cluster with proteins L14 and L19.

Functionally, one of the primary rRNA binding proteins, it binds directly near the 3'-end of the 23S rRNA, where it nucleates assembly of the 50S subunit. The protein is Large ribosomal subunit protein uL3 of Acholeplasma laidlawii (strain PG-8A).